The sequence spans 456 residues: MLNSAMSVVILAAGKGTRMYSDIPKVLHTLAGKPMVQHVIDAATKLGAAQVHLVYGHGGELLKQTLKDDKLNWVLQAEQLGTGHAMQQAAPFFSDDEDILMLYGDVPLISVETLQRLRDAKPQGGIGLLTVKLDDPSGYGRITRENGKVTGIVEHKDATDEQRQIQEINTGILIANGADLKRWLSKLTNNNAQGEYYITDIIALAYQEGREIAAVHPARISETDGVNNRLQLSRLERIYQAEQAEKLLLSGVMLRDPARFDLRGTLHCGMDVEIDANVIIEGYVTLGHRVKIGAGCIIKNSVIGDDCEISPYSVVEDAHLEAACTIGPFARLRPGAELLAGAHVGNFVEMKKARLGKGSKAGHLTYLGDAEIGDNVNIGAGTITCNYDGANKFKTVIGDDVFVGSDTQLVAPVTVGKGATIAAGTTVTRNVADNELVLSRVPQVHKQGWQRPVKKK.

Residues 1–229 (MLNSAMSVVI…ISETDGVNNR (229 aa)) form a pyrophosphorylase region. UDP-N-acetyl-alpha-D-glucosamine contacts are provided by residues 11–14 (LAAG), Lys25, Gln76, 81–82 (GT), 103–105 (YGD), Gly140, Glu154, Asn169, and Asn227. Asp105 is a Mg(2+) binding site. Asn227 provides a ligand contact to Mg(2+). Positions 230-250 (LQLSRLERIYQAEQAEKLLLS) are linker. Residues 251 to 456 (GVMLRDPARF…QGWQRPVKKK (206 aa)) form an N-acetyltransferase region. UDP-N-acetyl-alpha-D-glucosamine-binding residues include Arg333 and Lys351. His363 functions as the Proton acceptor in the catalytic mechanism. Residues Tyr366 and Asn377 each coordinate UDP-N-acetyl-alpha-D-glucosamine. Acetyl-CoA-binding positions include Ala380, 386–387 (NY), Ser405, Ala423, and Arg440.

In the N-terminal section; belongs to the N-acetylglucosamine-1-phosphate uridyltransferase family. This sequence in the C-terminal section; belongs to the transferase hexapeptide repeat family. As to quaternary structure, homotrimer. Requires Mg(2+) as cofactor.

It localises to the cytoplasm. It catalyses the reaction alpha-D-glucosamine 1-phosphate + acetyl-CoA = N-acetyl-alpha-D-glucosamine 1-phosphate + CoA + H(+). The enzyme catalyses N-acetyl-alpha-D-glucosamine 1-phosphate + UTP + H(+) = UDP-N-acetyl-alpha-D-glucosamine + diphosphate. Its pathway is nucleotide-sugar biosynthesis; UDP-N-acetyl-alpha-D-glucosamine biosynthesis; N-acetyl-alpha-D-glucosamine 1-phosphate from alpha-D-glucosamine 6-phosphate (route II): step 2/2. The protein operates within nucleotide-sugar biosynthesis; UDP-N-acetyl-alpha-D-glucosamine biosynthesis; UDP-N-acetyl-alpha-D-glucosamine from N-acetyl-alpha-D-glucosamine 1-phosphate: step 1/1. It functions in the pathway bacterial outer membrane biogenesis; LPS lipid A biosynthesis. Catalyzes the last two sequential reactions in the de novo biosynthetic pathway for UDP-N-acetylglucosamine (UDP-GlcNAc). The C-terminal domain catalyzes the transfer of acetyl group from acetyl coenzyme A to glucosamine-1-phosphate (GlcN-1-P) to produce N-acetylglucosamine-1-phosphate (GlcNAc-1-P), which is converted into UDP-GlcNAc by the transfer of uridine 5-monophosphate (from uridine 5-triphosphate), a reaction catalyzed by the N-terminal domain. In Salmonella dublin (strain CT_02021853), this protein is Bifunctional protein GlmU.